The primary structure comprises 211 residues: MIGIIDYGMGNLYSVSKALERLGCPYVLSGDKEELEQARGLILPGVGSFRDAMHILNETGLAAFIRSAVENGTPLLGICLGMQLLFDESEENGPTKGLGLLRGRVVRFPGVTKTGEPYKVPHMGWNRLRFHRPSPLLRGVEEGHVYFVHSYYVIPGDEDVVLASSEYDVDVPAVVGRGCVFGTQFHPEKSGAVGMSILNNYVGIATGRGNG.

The Glutamine amidotransferase type-1 domain maps to 1–211; it reads MIGIIDYGMG…VGIATGRGNG (211 aa). Cys79 (nucleophile) is an active-site residue. Catalysis depends on residues His186 and Glu188.

Heterodimer of HisH and HisF.

The protein resides in the cytoplasm. The catalysed reaction is 5-[(5-phospho-1-deoxy-D-ribulos-1-ylimino)methylamino]-1-(5-phospho-beta-D-ribosyl)imidazole-4-carboxamide + L-glutamine = D-erythro-1-(imidazol-4-yl)glycerol 3-phosphate + 5-amino-1-(5-phospho-beta-D-ribosyl)imidazole-4-carboxamide + L-glutamate + H(+). The enzyme catalyses L-glutamine + H2O = L-glutamate + NH4(+). Its pathway is amino-acid biosynthesis; L-histidine biosynthesis; L-histidine from 5-phospho-alpha-D-ribose 1-diphosphate: step 5/9. IGPS catalyzes the conversion of PRFAR and glutamine to IGP, AICAR and glutamate. The HisH subunit catalyzes the hydrolysis of glutamine to glutamate and ammonia as part of the synthesis of IGP and AICAR. The resulting ammonia molecule is channeled to the active site of HisF. This chain is Imidazole glycerol phosphate synthase subunit HisH, found in Geobacillus kaustophilus (strain HTA426).